The following is a 213-amino-acid chain: Pyridoxine/pyridoxamine 5'-phosphate oxidase (213 aa).

Substrate-binding positions include 8-11 (RKNY) and Lys66. Residues 61–66 (RIVLIK), 76–77 (FT), Arg82, Lys83, and Gln105 each bind FMN. Residues Tyr123, Arg127, and Ser131 each contribute to the substrate site. Residues 140-141 (QS) and Trp184 contribute to the FMN site. 190–192 (RLH) is a substrate binding site. Arg194 is an FMN binding site.

The protein belongs to the pyridoxamine 5'-phosphate oxidase family. In terms of assembly, homodimer. FMN serves as cofactor.

It catalyses the reaction pyridoxamine 5'-phosphate + O2 + H2O = pyridoxal 5'-phosphate + H2O2 + NH4(+). The catalysed reaction is pyridoxine 5'-phosphate + O2 = pyridoxal 5'-phosphate + H2O2. It functions in the pathway cofactor metabolism; pyridoxal 5'-phosphate salvage; pyridoxal 5'-phosphate from pyridoxamine 5'-phosphate: step 1/1. Its pathway is cofactor metabolism; pyridoxal 5'-phosphate salvage; pyridoxal 5'-phosphate from pyridoxine 5'-phosphate: step 1/1. Its function is as follows. Catalyzes the oxidation of either pyridoxine 5'-phosphate (PNP) or pyridoxamine 5'-phosphate (PMP) into pyridoxal 5'-phosphate (PLP). The sequence is that of Pyridoxine/pyridoxamine 5'-phosphate oxidase from Paraburkholderia xenovorans (strain LB400).